The following is a 34-amino-acid chain: Non-toxic venom protein (34 aa).

The 34-residue stretch at 1 to 34 folds into the LCN-type CS-alpha/beta domain; sequence KEGYPTNSEGCKITXLFNDPYCKGXCINLSTQAD.

In terms of tissue distribution, expressed by the venom gland.

The protein localises to the secreted. Its function is as follows. Does not cause symptoms of intoxication, paralysis or death in insects (A.domestica). This is Non-toxic venom protein from Rhopalurus junceus (Caribbean blue scorpion).